Consider the following 266-residue polypeptide: Type III pantothenate kinase (266 aa).

6 to 13 (DAGNTNIV) is a binding site for ATP. 107 to 110 (GADR) lines the substrate pocket. Asp109 functions as the Proton acceptor in the catalytic mechanism. Asp129 is a binding site for K(+). Thr132 provides a ligand contact to ATP. Substrate is bound at residue Thr184.

This sequence belongs to the type III pantothenate kinase family. As to quaternary structure, homodimer. It depends on NH4(+) as a cofactor. K(+) serves as cofactor.

It localises to the cytoplasm. The enzyme catalyses (R)-pantothenate + ATP = (R)-4'-phosphopantothenate + ADP + H(+). The protein operates within cofactor biosynthesis; coenzyme A biosynthesis; CoA from (R)-pantothenate: step 1/5. Catalyzes the phosphorylation of pantothenate (Pan), the first step in CoA biosynthesis. The polypeptide is Type III pantothenate kinase (Acidiphilium cryptum (strain JF-5)).